Reading from the N-terminus, the 548-residue chain is Putative F-box protein At1g33020 (548 aa).

In terms of domain architecture, F-box spans 4–53; that stretch reads AENLDSIPTDLILEIFSRMSTKSIGRCRCVSKLWKSMLGHPYFTELFLTR. The tract at residues 380–404 is disordered; it reads KPISPPKQKPKPPSTETSSREDHQG. Residues 382–392 show a composition bias toward pro residues; it reads ISPPKQKPKPP.

The sequence is that of Putative F-box protein At1g33020 from Arabidopsis thaliana (Mouse-ear cress).